The sequence spans 312 residues: tRNA pseudouridine synthase B (312 aa).

Asp47 (nucleophile) is an active-site residue.

Belongs to the pseudouridine synthase TruB family. Type 1 subfamily.

It catalyses the reaction uridine(55) in tRNA = pseudouridine(55) in tRNA. Responsible for synthesis of pseudouridine from uracil-55 in the psi GC loop of transfer RNAs. The chain is tRNA pseudouridine synthase B from Vibrio cholerae serotype O1 (strain M66-2).